Consider the following 699-residue polypeptide: Elongation factor G (699 aa).

In terms of domain architecture, tr-type G spans 8-283 (EHIRNIGICA…AVVDFLPSPI (276 aa)). GTP is bound by residues 17–24 (AHIDAGKT), 81–85 (DTPGH), and 135–138 (NKMD).

This sequence belongs to the TRAFAC class translation factor GTPase superfamily. Classic translation factor GTPase family. EF-G/EF-2 subfamily.

The protein resides in the cytoplasm. Functionally, catalyzes the GTP-dependent ribosomal translocation step during translation elongation. During this step, the ribosome changes from the pre-translocational (PRE) to the post-translocational (POST) state as the newly formed A-site-bound peptidyl-tRNA and P-site-bound deacylated tRNA move to the P and E sites, respectively. Catalyzes the coordinated movement of the two tRNA molecules, the mRNA and conformational changes in the ribosome. The protein is Elongation factor G of Rickettsia rickettsii.